A 363-amino-acid chain; its full sequence is Pyrimidine monooxygenase RutA (363 aa).

Residues 49–50 (IK), asparagine 115, glutamate 124, 140–141 (RY), and serine 190 each bind FMN.

Belongs to the NtaA/SnaA/DszA monooxygenase family. RutA subfamily.

It carries out the reaction uracil + FMNH2 + NADH + O2 = (Z)-3-ureidoacrylate + FMN + NAD(+) + H2O + H(+). The catalysed reaction is thymine + FMNH2 + NADH + O2 = (Z)-2-methylureidoacrylate + FMN + NAD(+) + H2O + H(+). Functionally, catalyzes the pyrimidine ring opening between N-3 and C-4 by an unusual flavin hydroperoxide-catalyzed mechanism, adding oxygen atoms in the process to yield ureidoacrylate peracid, that immediately reacts with FMN forming ureidoacrylate and FMN-N(5)-oxide. The FMN-N(5)-oxide reacts spontaneously with NADH to produce FMN. Requires the flavin reductase RutF to regenerate FMN in vivo. This Escherichia coli O127:H6 (strain E2348/69 / EPEC) protein is Pyrimidine monooxygenase RutA.